The sequence spans 113 residues: U11-theraphotoxin-Hhn1a (113 aa).

The first 21 residues, 1–21 (MNTVRVTFLLVFVLAVSLGQA), serve as a signal peptide directing secretion. Residues 22–74 (DKDENRMEMQEKTEQGESYLDFAENLLLQKLEELEAKLLEEDSEESRNSRQKR) constitute a propeptide that is removed on maturation. Intrachain disulfides connect cysteine 75/cysteine 90, cysteine 82/cysteine 95, and cysteine 89/cysteine 110.

The protein belongs to the neurotoxin 14 (magi-1) family. 01 (HNTX-16) subfamily. As to expression, expressed by the venom gland.

It localises to the secreted. Its function is as follows. Probable ion channel inhibitor. The polypeptide is U11-theraphotoxin-Hhn1a (Cyriopagopus hainanus (Chinese bird spider)).